Reading from the N-terminus, the 274-residue chain is Penicillin-insensitive murein endopeptidase (274 aa).

An N-terminal signal peptide occupies residues 1-19; it reads MNKTAIALLALLASSASLA. 3 disulfide bridges follow: cysteine 44-cysteine 265, cysteine 187-cysteine 235, and cysteine 216-cysteine 223. Zn(2+) is bound by residues histidine 110, histidine 113, aspartate 120, aspartate 147, histidine 150, and histidine 211.

The protein belongs to the peptidase M74 family. As to quaternary structure, dimer. It depends on Zn(2+) as a cofactor.

It localises to the periplasm. Functionally, murein endopeptidase that cleaves the D-alanyl-meso-2,6-diamino-pimelyl amide bond that connects peptidoglycan strands. Likely plays a role in the removal of murein from the sacculus. The sequence is that of Penicillin-insensitive murein endopeptidase from Shigella sonnei (strain Ss046).